The sequence spans 342 residues: Ribosomal RNA small subunit methyltransferase H (342 aa).

Residues 62–64, Asp-82, Phe-108, Asp-129, and Gln-136 contribute to the S-adenosyl-L-methionine site; that span reads GGH. Residues 280–319 are disordered; sequence RHSKGQYPEDENLPMPPKRPRYFSKPKRVGPSKAEISHNP. Residues 297–309 show a composition bias toward basic residues; the sequence is KRPRYFSKPKRVG.

Belongs to the methyltransferase superfamily. RsmH family.

The protein localises to the cytoplasm. It catalyses the reaction cytidine(1402) in 16S rRNA + S-adenosyl-L-methionine = N(4)-methylcytidine(1402) in 16S rRNA + S-adenosyl-L-homocysteine + H(+). In terms of biological role, specifically methylates the N4 position of cytidine in position 1402 (C1402) of 16S rRNA. The chain is Ribosomal RNA small subunit methyltransferase H from Psychrobacter cryohalolentis (strain ATCC BAA-1226 / DSM 17306 / VKM B-2378 / K5).